Reading from the N-terminus, the 512-residue chain is Lysine--tRNA ligase (512 aa).

Residues Glu408 and Glu415 each contribute to the Mg(2+) site.

The protein belongs to the class-II aminoacyl-tRNA synthetase family. As to quaternary structure, homodimer. The cofactor is Mg(2+).

Its subcellular location is the cytoplasm. The enzyme catalyses tRNA(Lys) + L-lysine + ATP = L-lysyl-tRNA(Lys) + AMP + diphosphate. This Prochlorococcus marinus subsp. pastoris (strain CCMP1986 / NIES-2087 / MED4) protein is Lysine--tRNA ligase.